The sequence spans 153 residues: MPAPAEVQQATLSKFVDAWKRWNADDFIGLWSDSFTFKVLPLSDGKPTRPRDKVAPLYRNLIGTLTDYKLDVKHIVHDASKGKACIYAVASANAPCGDYKNEQAIFITFSESGDKIESMEEMNDNAFRKEWDPKYHAYHGYGQPPTAKAAAGS.

It participates in pigment biosynthesis. Part of the ergochrome gene cluster responsible for the typical purple-black color of the ergot sclerotia. The ergochrome gene cluster produces several ergot pigments including the yellow ergochrome secalonic acid and its derivatives, as well as the red anthraquinones endocrocin and clavorubin. The pathway begins with the synthesis of atrochrysone thioester by the polyketide synthase (PKS) CPUR_05437. The atrochrysone carboxyl ACP thioesterase CPUR_05436 then breaks the thioester bond and releases the atrochrysone carboxylic acid from CPUR_05437. The atrochrysone carboxylic acid is then converted to atrochrysone which is further transformed into emodin anthrone. The next step is performed by the anthrone oxygenase CPUR_05434 that catalyzes the oxidation of emodinanthrone to emodin. Emodin is further modified to yield monodictyphenone via several steps involving CPUR_05427, CPUR_05428, CPUR_05429 and CPUR_05430. The short chain dehydrogenase/reductase CPUR_05418 then catalyzes the C-5 ketoreduction to give the xanthone skeleton of the monomeric units. Ergochromes formation requires further dimerization steps of different xanthone units, probably catalyzed by the cytochrome P450 monooxygenase CPUR_05419. CPUR_05425, CPUR_05426 and CPUR_05431 are unique to Claviceps, thus it is likely that they are involved in further modification of xanthone units or in their dimerization. The yellow ergochromes and the red anthraquinone pigments endocrocin and clavorubin are products from the same PKS derived precursors and the latter are likely shunt products in the pathway of xanthone biosynthesis. It is proposed that atrochrysone carboxylic acid released from the PKS CPUR_05437 can also be converted to endocrocin anthrone which is further oxidized into endocrocin by CPUR_05435. Endocrocin could be then modified to clavorubin, possibly by CPUR_05423 and CPUR_05431. Clavorubin is the principal anthraquinone metabolite produced by the cluster with a much higher yield compared to endocrocin. The chain is Ergochrome gene cluster protein CPUR_05425 from Claviceps purpurea (strain 20.1) (Ergot fungus).